A 301-amino-acid polypeptide reads, in one-letter code: Probable 5-dehydro-4-deoxyglucarate dehydratase (301 aa).

This sequence belongs to the DapA family.

The enzyme catalyses 5-dehydro-4-deoxy-D-glucarate + H(+) = 2,5-dioxopentanoate + CO2 + H2O. It functions in the pathway carbohydrate acid metabolism; D-glucarate degradation; 2,5-dioxopentanoate from D-glucarate: step 2/2. In Allorhizobium ampelinum (strain ATCC BAA-846 / DSM 112012 / S4) (Agrobacterium vitis (strain S4)), this protein is Probable 5-dehydro-4-deoxyglucarate dehydratase.